We begin with the raw amino-acid sequence, 3583 residues long: Surfactin synthase subunit 2 (3583 aa).

Carrier domains lie at 965–1039, 2005–2080, and 3034–3108; these read APKT…EENE, APET…EASA, and APTT…ERAE. 3 positions are modified to O-(pantetheine 4'-phosphoryl)serine: serine 999, serine 2040, and serine 3069.

Belongs to the ATP-dependent AMP-binding enzyme family. It depends on pantetheine 4'-phosphate as a cofactor.

It functions in the pathway antibiotic biosynthesis; surfactin biosynthesis. In terms of biological role, this protein is a multifunctional enzyme able to activate and polymerize the amino acids Leu, Glu, Asp and Val. Activation sites for these AA consist of individual domains. This is Surfactin synthase subunit 2 (srfAB) from Bacillus subtilis (strain 168).